The following is a 414-amino-acid chain: Na(+)-translocating NADH-quinone reductase subunit B (414 aa).

Helical transmembrane passes span 23 to 40 (WFAL…PGLV), 56 to 76 (IMIM…YNAG), 129 to 149 (FLPI…LFCM), and 164 to 184 (ILFA…LGIT). FMN phosphoryl threonine is present on threonine 236. 5 helical membrane-spanning segments follow: residues 268-288 (IPGS…AMIV), 297-317 (IIAG…VVGS), 325-345 (MPWH…FMAT), 358-378 (WWYG…NPAY), and 381-401 (GMML…HVVI).

This sequence belongs to the NqrB/RnfD family. In terms of assembly, composed of six subunits; NqrA, NqrB, NqrC, NqrD, NqrE and NqrF. The cofactor is FMN.

Its subcellular location is the cell inner membrane. It catalyses the reaction a ubiquinone + n Na(+)(in) + NADH + H(+) = a ubiquinol + n Na(+)(out) + NAD(+). NQR complex catalyzes the reduction of ubiquinone-1 to ubiquinol by two successive reactions, coupled with the transport of Na(+) ions from the cytoplasm to the periplasm. NqrA to NqrE are probably involved in the second step, the conversion of ubisemiquinone to ubiquinol. In Vibrio parahaemolyticus serotype O3:K6 (strain RIMD 2210633), this protein is Na(+)-translocating NADH-quinone reductase subunit B.